The following is a 151-amino-acid chain: Ribosomal RNA large subunit methyltransferase H (151 aa).

S-adenosyl-L-methionine-binding positions include L73, G100, and 119 to 124 (LTKLTL).

Belongs to the RNA methyltransferase RlmH family. In terms of assembly, homodimer.

It localises to the cytoplasm. It carries out the reaction pseudouridine(1915) in 23S rRNA + S-adenosyl-L-methionine = N(3)-methylpseudouridine(1915) in 23S rRNA + S-adenosyl-L-homocysteine + H(+). Functionally, specifically methylates the pseudouridine at position 1915 (m3Psi1915) in 23S rRNA. The polypeptide is Ribosomal RNA large subunit methyltransferase H (Campylobacter hominis (strain ATCC BAA-381 / DSM 21671 / CCUG 45161 / LMG 19568 / NCTC 13146 / CH001A)).